The primary structure comprises 871 residues: Probable receptor-like protein kinase At2g21480 (871 aa).

The first 39 residues, 1–39, serve as a signal peptide directing secretion; it reads MEIRKKPNIPMCLVLDSSSRPFMTLLFTILLFLTGLASA. Residues 40-439 lie on the Extracellular side of the membrane; sequence VGAVGGSPTA…GQRASMGKQG (400 aa). N-linked (GlcNAc...) asparagine glycans are attached at residues N169, N182, N253, N316, and N381. The chain crosses the membrane as a helical span at residues 440 to 460; the sequence is MVATAGFVMMFGAFVGLGAMV. Topologically, residues 461-871 are cytoplasmic; sequence YKWKKRPQDW…FTQFASLNGR (411 aa). One can recognise a Protein kinase domain in the interval 525–797; sequence FDASEIIGVG…GDVLWNLEYA (273 aa). ATP is bound by residues 531-539 and K553; that span reads IGVGGFGNV. The Proton acceptor role is filled by D649. The segment at 808-871 is disordered; the sequence is KAEAEEVETP…FTQFASLNGR (64 aa). A compositionally biased stretch (low complexity) spans 817–839; that stretch reads PKPVAVPAAAPTSPAATTAAASE. Residues 854–871 are compositionally biased toward polar residues; the sequence is DQHSGTTMFTQFASLNGR.

The protein belongs to the protein kinase superfamily. Ser/Thr protein kinase family.

The protein localises to the membrane. In Arabidopsis thaliana (Mouse-ear cress), this protein is Probable receptor-like protein kinase At2g21480.